The sequence spans 505 residues: tRNA-2-methylthio-N(6)-dimethylallyladenosine synthase (505 aa).

Residues 14–132 (RTYEVRTYGC…LPVLLERARV (119 aa)) form the MTTase N-terminal domain. Residues Cys23, Cys61, Cys95, Cys169, Cys173, and Cys176 each coordinate [4Fe-4S] cluster. The 232-residue stretch at 155-386 (RESAYAAWVS…ALQEEISWDE (232 aa)) folds into the Radical SAM core domain. A TRAM domain is found at 388–456 (KKQVGRTLEL…PHHLLAEGAV (69 aa)).

The protein belongs to the methylthiotransferase family. MiaB subfamily. In terms of assembly, monomer. Requires [4Fe-4S] cluster as cofactor.

Its subcellular location is the cytoplasm. The enzyme catalyses N(6)-dimethylallyladenosine(37) in tRNA + (sulfur carrier)-SH + AH2 + 2 S-adenosyl-L-methionine = 2-methylsulfanyl-N(6)-dimethylallyladenosine(37) in tRNA + (sulfur carrier)-H + 5'-deoxyadenosine + L-methionine + A + S-adenosyl-L-homocysteine + 2 H(+). In terms of biological role, catalyzes the methylthiolation of N6-(dimethylallyl)adenosine (i(6)A), leading to the formation of 2-methylthio-N6-(dimethylallyl)adenosine (ms(2)i(6)A) at position 37 in tRNAs that read codons beginning with uridine. This chain is tRNA-2-methylthio-N(6)-dimethylallyladenosine synthase, found in Streptomyces coelicolor (strain ATCC BAA-471 / A3(2) / M145).